Reading from the N-terminus, the 327-residue chain is MATVTEMPTDVVVVDDVKEVSTKSEKIIDEGIEKSSITDSKTETESRLDMHKLVAMFKKLNPLAKEFFPSYYDPKKNNQVAKANQFLPADDFETTKKQSGEEFDLDAKKDDNTRKRRNYSQGRRRLTGRISKAQREDSIRRTVYVSDIDQSVTEEGLAGLFSNCGQVVDCRICGDPHSVLRFAFVEFADDQGAHEALSLGGTMLGFYPVRVLPSKTAILPVNPTFLPRSEDEREMCTRTIYCTNIDKKVSQADVRNFFESACGEVTRLRLLGDQLHSTRIAFVEFALADSALSALNCSGMVVGSQPIRVSPSKTPVRPRITRPPSTN.

The PAM2-like motif lies at 59–69 (KLNPLAKEFFP). Residues 97–113 (KQSGEEFDLDAKKDDNT) show a composition bias toward basic and acidic residues. Positions 97-132 (KQSGEEFDLDAKKDDNTRKRRNYSQGRRRLTGRISK) are disordered. A Bipartite nuclear localization signal motif is present at residues 114–125 (RKRRNYSQGRRR). Positions 114–127 (RKRRNYSQGRRRLT) are enriched in basic residues. RRM domains lie at 141–216 (RTVY…PSKT) and 238–314 (RTIY…PSKT). Residues 308 to 327 (RVSPSKTPVRPRITRPPSTN) form a disordered region.

Its subcellular location is the nucleus. The polypeptide is Polyadenylate-binding protein-interacting protein 9 (CID9) (Arabidopsis thaliana (Mouse-ear cress)).